We begin with the raw amino-acid sequence, 329 residues long: D-threo-aldose 1-dehydrogenase (329 aa).

Tyr58 acts as the Proton donor in catalysis. His145 contributes to the substrate binding site.

Belongs to the aldo/keto reductase family.

It catalyses the reaction a D-threo-aldose + NAD(+) = a D-threo-aldono-1,5-lactone + NADH + H(+). With respect to regulation, inhibited strongly by Hg(2+), Cd(2+) and para-chloromercuribenzoic acid (PCMB) and weakly by Zn(2+) and iodoacetamide. Also inhibited strongly by L-xylose but not D-glucose. Its function is as follows. Catalyzes the oxidation of L-fucose to L-fuconolactone in the presence of NADP(+). Also active against L-galactose and, to a much lesser degree, D-arabinose. Uses NADP(+) as a hydrogen acceptor much more efficiently than NAD(+). This Pseudomonas sp protein is D-threo-aldose 1-dehydrogenase.